The primary structure comprises 100 residues: Osteocalcin (100 aa).

Positions 1 to 23 are cleaved as a signal peptide; sequence MRALTLLALLALAALCITGQAGA. The propeptide occupies 24-51; the sequence is KPSGADSSKGAAFVSKQEGSEVVKRPRR. The Gla domain maps to 52–98; the sequence is YLYQWLGAPVPYPDPLEPKREVCELNPDCDELADHIGFQEAYRRFYG. Ca(2+)-binding residues include E68, E72, E75, and D81. 3 positions are modified to 4-carboxyglutamate: E68, E72, and E75. Residues C74 and C80 are joined by a disulfide bond.

The protein belongs to the osteocalcin/matrix Gla protein family. In terms of processing, gamma-carboxyglutamate residues are formed by vitamin K dependent carboxylation by GGCX. These residues are essential for the binding of calcium. Decarboxylation promotes the hormone activity.

Its subcellular location is the secreted. Functionally, the carboxylated form is one of the main organic components of the bone matrix, which constitutes 1-2% of the total bone protein: it acts as a negative regulator of bone formation and is required to limit bone formation without impairing bone resorption or mineralization. The carboxylated form binds strongly to apatite and calcium. Its function is as follows. The uncarboxylated form acts as a hormone secreted by osteoblasts, which regulates different cellular processes, such as energy metabolism, male fertility and brain development. Regulates of energy metabolism by acting as a hormone favoring pancreatic beta-cell proliferation, insulin secretion and sensitivity and energy expenditure. Uncarboxylated osteocalcin hormone also promotes testosterone production in the testes: acts as a ligand for G protein-coupled receptor GPRC6A at the surface of Leydig cells, initiating a signaling response that promotes the expression of enzymes required for testosterone synthesis in a CREB-dependent manner. Also acts as a regulator of brain development: osteocalcin hormone crosses the blood-brain barrier and acts as a ligand for GPR158 on neurons, initiating a signaling response that prevents neuronal apoptosis in the hippocampus, favors the synthesis of all monoamine neurotransmitters and inhibits that of gamma-aminobutyric acid (GABA). Osteocalcin also crosses the placenta during pregnancy and maternal osteocalcin is required for fetal brain development. In Pongo pygmaeus (Bornean orangutan), this protein is Osteocalcin.